A 388-amino-acid chain; its full sequence is Succinate--CoA ligase [ADP-forming] subunit beta (388 aa).

In terms of domain architecture, ATP-grasp spans 9-244 (KSLFAEYGLP…PSQDDAREAH (236 aa)). ATP is bound by residues Lys-46, 53–55 (GRG), Glu-99, Thr-102, and Glu-107. Residues Asn-199 and Asp-213 each coordinate Mg(2+). Substrate contacts are provided by residues Asn-264 and 321–323 (GIV).

The protein belongs to the succinate/malate CoA ligase beta subunit family. Heterotetramer of two alpha and two beta subunits. Mg(2+) is required as a cofactor.

It catalyses the reaction succinate + ATP + CoA = succinyl-CoA + ADP + phosphate. It carries out the reaction GTP + succinate + CoA = succinyl-CoA + GDP + phosphate. The protein operates within carbohydrate metabolism; tricarboxylic acid cycle; succinate from succinyl-CoA (ligase route): step 1/1. Its function is as follows. Succinyl-CoA synthetase functions in the citric acid cycle (TCA), coupling the hydrolysis of succinyl-CoA to the synthesis of either ATP or GTP and thus represents the only step of substrate-level phosphorylation in the TCA. The beta subunit provides nucleotide specificity of the enzyme and binds the substrate succinate, while the binding sites for coenzyme A and phosphate are found in the alpha subunit. This is Succinate--CoA ligase [ADP-forming] subunit beta from Shewanella putrefaciens (strain CN-32 / ATCC BAA-453).